The sequence spans 349 residues: N-acetyltaurine hydrolase (349 aa).

6 residues coordinate a divalent metal cation: His-26, His-28, Glu-169, His-201, His-230, and Asp-298.

This sequence belongs to the metallo-dependent hydrolases superfamily. Phosphotriesterase family. It depends on a divalent metal cation as a cofactor.

The protein localises to the cytoplasm. It is found in the cytosol. It carries out the reaction N-acetyltaurine + H2O = taurine + acetate. It catalyses the reaction N-propanoyltaurine + H2O = propanoate + taurine. The catalysed reaction is N-acetyl-L-methionine + H2O = L-methionine + acetate. The enzyme catalyses N-acetyl-L-isoleucine + H2O = L-isoleucine + acetate. It carries out the reaction N-acetyl-L-leucine + H2O = L-leucine + acetate. It catalyses the reaction N-acetyl-L-valine + H2O = L-valine + acetate. In terms of biological role, N-acetyltaurine hydrolase that catalyzes the hydrolysis of N-acetyltaurine into taurine and acetate. PTER also acts on other N-acetyl amino acids (Met, Ile, Leu, Val) and N-propionyltaurine, but at lower rates. The polypeptide is N-acetyltaurine hydrolase (pter) (Salmo salar (Atlantic salmon)).